Consider the following 299-residue polypeptide: 4-diphosphocytidyl-2-C-methyl-D-erythritol kinase (299 aa).

The active site involves lysine 33. 115-125 (PLASGLGGGSS) is an ATP binding site. Aspartate 154 is a catalytic residue.

Belongs to the GHMP kinase family. IspE subfamily.

The catalysed reaction is 4-CDP-2-C-methyl-D-erythritol + ATP = 4-CDP-2-C-methyl-D-erythritol 2-phosphate + ADP + H(+). The protein operates within isoprenoid biosynthesis; isopentenyl diphosphate biosynthesis via DXP pathway; isopentenyl diphosphate from 1-deoxy-D-xylulose 5-phosphate: step 3/6. Its function is as follows. Catalyzes the phosphorylation of the position 2 hydroxy group of 4-diphosphocytidyl-2C-methyl-D-erythritol. The protein is 4-diphosphocytidyl-2-C-methyl-D-erythritol kinase of Deinococcus geothermalis (strain DSM 11300 / CIP 105573 / AG-3a).